Consider the following 1385-residue polypeptide: Pesticidal crystal protein Cry5Aa (1385 aa).

2 disordered regions span residues Asn-768–Asn-799 and Pro-1359–Gln-1385. Residues Asn-782–Gly-796 show a composition bias toward gly residues. Residues Asn-1370 to Gln-1385 show a composition bias toward low complexity.

Belongs to the delta endotoxin family.

Functionally, endotoxin with nematicidal activity. The polypeptide is Pesticidal crystal protein Cry5Aa (cry5Aa) (Bacillus thuringiensis subsp. darmstadiensis).